A 335-amino-acid polypeptide reads, in one-letter code: Vitamin B12 import system permease protein BtuC (335 aa).

The next 9 membrane-spanning stretches (helical) occupy residues 21-43 (FLAI…GENW), 63-82 (FPRV…AGAV), 95-114 (GLLG…VLMF), 119-141 (PFWL…LLTF), 153-175 (LLVG…YFST), 195-212 (WRHQ…IWLS), 244-266 (FAVG…IGLV), 281-303 (TLLP…LSRL), and 310-329 (VPIG…WLLL).

This sequence belongs to the binding-protein-dependent transport system permease family. FecCD subfamily. The complex is composed of two ATP-binding proteins (BtuD), two transmembrane proteins (BtuC) and a solute-binding protein (BtuF).

It localises to the cell inner membrane. Part of the ABC transporter complex BtuCDF involved in vitamin B12 import. Involved in the translocation of the substrate across the membrane. The protein is Vitamin B12 import system permease protein BtuC of Photorhabdus laumondii subsp. laumondii (strain DSM 15139 / CIP 105565 / TT01) (Photorhabdus luminescens subsp. laumondii).